The primary structure comprises 892 residues: Putative GTP diphosphokinase RSH1, chloroplastic (892 aa).

A chloroplast-targeting transit peptide spans 1-52; sequence MQPPTGAVSGSSSSSLECVSSCRTSWRGGGRPYECSVLSCAWNAPRALTGAL. The 108-residue stretch at 184-291 folds into the HD domain; the sequence is FIIHPVEVAR…VKLADRLHNM (108 aa). Residues 574-637 enclose the TGS domain; the sequence is LGSRVFVFTP…ANAEVVEIII (64 aa). The 72-residue stretch at 809 to 880 folds into the ACT domain; that stretch reads WLCIVCVDRK…MILGVLGWSV (72 aa).

The protein belongs to the RelA/SpoT family.

The protein resides in the plastid. The protein localises to the chloroplast. The enzyme catalyses GTP + ATP = guanosine 3'-diphosphate 5'-triphosphate + AMP. In terms of biological role, may be involved in a rapid plant ppGpp (guanosine 3'-diphosphate 5'-diphosphate)-mediated response to pathogens and other stresses. The protein is Putative GTP diphosphokinase RSH1, chloroplastic (RSH1) of Oryza sativa subsp. japonica (Rice).